A 425-amino-acid chain; its full sequence is MKFGSALVAAVAAVAGVAAKDYGGVPGQPIQKSGKGAVFSGATNPQLDLQNPSNINGQPATDIGLVPNLKWSFSLSKTRMFHGGWIREQVISDLPASHDIAGAQVHLTKGGIRQMHWHRVAEWGYVYAGSILVFAVTEDGQYQIDKLTPGDIYYFPKGAAHSFQGIEDENEVLVAFDEGDFDKIGYLFPPYYSNINLQLSNAFNYRTTFQVAEWIAHTPQDVLAKNFNISTGGTFDKTKSNMLEIINSTTSTHNVTGPNGALMGNSSYTFHIRDAPEIQVPGGGGTIQIVDSKNFPISKTIACAIVRLKPGALRELHWHPTAEEWLYFHSGNARATVYVSGGLSRTFDFTAGDTGVFPDNAGHYIENVSEDEDLVYLELYKADRVADVSLSQWLALTPHDIAAAAINVPIDVIDKLKKDKQYIIQ.

The first 19 residues, Met-1 to Ala-19, serve as a signal peptide directing secretion. A Cupin type-1 1 domain is found at Phe-73–Asp-236. The Mn(2+) site is built by His-116, His-118, Glu-122, and His-161. N-linked (GlcNAc...) asparagine glycans are attached at residues Asn-228, Asn-247, Asn-254, and Asn-265. A Cupin type-1 2 domain is found at Phe-270–Asp-414. His-317, His-319, Glu-324, and His-363 together coordinate Mn(2+). A glycan (N-linked (GlcNAc...) asparagine) is linked at Asn-367. Glu-378 functions as the Proton donor in the catalytic mechanism.

Mn(2+) is required as a cofactor.

The protein localises to the secreted. It catalyses the reaction oxalate + H(+) = formate + CO2. In terms of biological role, converts oxalate to formate and CO(2) in an O(2)-dependent reaction. Can also catalyze minor side reactions: oxalate oxidation to produce H(2)O(2), and oxalate-dependent, H(2)O(2)-independent dye oxidations. The chain is Oxalate decarboxylase ARB_02208 from Arthroderma benhamiae (strain ATCC MYA-4681 / CBS 112371) (Trichophyton mentagrophytes).